The primary structure comprises 137 residues: Small heat shock protein IbpA (137 aa).

Positions 28–137 (SQGNGGYPPY…TLKPRRIEIK (110 aa)) constitute a sHSP domain.

This sequence belongs to the small heat shock protein (HSP20) family. As to quaternary structure, monomer. Forms homomultimers of about 100-150 subunits at optimal growth temperatures. Conformation changes to monomers at high temperatures or high ionic concentrations.

The protein resides in the cytoplasm. Functionally, associates with aggregated proteins, together with IbpB, to stabilize and protect them from irreversible denaturation and extensive proteolysis during heat shock and oxidative stress. Aggregated proteins bound to the IbpAB complex are more efficiently refolded and reactivated by the ATP-dependent chaperone systems ClpB and DnaK/DnaJ/GrpE. Its activity is ATP-independent. In Serratia proteamaculans (strain 568), this protein is Small heat shock protein IbpA.